A 277-amino-acid chain; its full sequence is 3-methyl-2-oxobutanoate hydroxymethyltransferase (277 aa).

Mg(2+) contacts are provided by Asp53 and Asp96. Residues 53–54 (DS), Asp96, and Lys126 each bind 3-methyl-2-oxobutanoate. Position 128 (Glu128) interacts with Mg(2+). Glu195 functions as the Proton acceptor in the catalytic mechanism.

It belongs to the PanB family. As to quaternary structure, homodecamer; pentamer of dimers. Requires Mg(2+) as cofactor.

Its subcellular location is the cytoplasm. The catalysed reaction is 3-methyl-2-oxobutanoate + (6R)-5,10-methylene-5,6,7,8-tetrahydrofolate + H2O = 2-dehydropantoate + (6S)-5,6,7,8-tetrahydrofolate. It functions in the pathway cofactor biosynthesis; (R)-pantothenate biosynthesis; (R)-pantoate from 3-methyl-2-oxobutanoate: step 1/2. Catalyzes the reversible reaction in which hydroxymethyl group from 5,10-methylenetetrahydrofolate is transferred onto alpha-ketoisovalerate to form ketopantoate. This Chlorobium phaeobacteroides (strain BS1) protein is 3-methyl-2-oxobutanoate hydroxymethyltransferase.